The sequence spans 421 residues: Glucose-1-phosphate adenylyltransferase (421 aa).

Alpha-D-glucose 1-phosphate is bound by residues Y108, G173, 188 to 189 (EK), and S206.

The protein belongs to the bacterial/plant glucose-1-phosphate adenylyltransferase family. In terms of assembly, homotetramer.

It carries out the reaction alpha-D-glucose 1-phosphate + ATP + H(+) = ADP-alpha-D-glucose + diphosphate. It participates in glycan biosynthesis; glycogen biosynthesis. In terms of biological role, involved in the biosynthesis of ADP-glucose, a building block required for the elongation reactions to produce glycogen. Catalyzes the reaction between ATP and alpha-D-glucose 1-phosphate (G1P) to produce pyrophosphate and ADP-Glc. This Mesorhizobium japonicum (strain LMG 29417 / CECT 9101 / MAFF 303099) (Mesorhizobium loti (strain MAFF 303099)) protein is Glucose-1-phosphate adenylyltransferase.